The primary structure comprises 308 residues: Glutaminase (308 aa).

7 residues coordinate substrate: S66, N117, E161, N168, Y192, Y244, and V262.

The protein belongs to the glutaminase family. In terms of assembly, homotetramer.

It carries out the reaction L-glutamine + H2O = L-glutamate + NH4(+). The protein is Glutaminase of Proteus mirabilis (strain HI4320).